Here is a 190-residue protein sequence, read N- to C-terminus: dTTP/UTP pyrophosphatase (190 aa).

Asp-71 functions as the Proton acceptor in the catalytic mechanism.

This sequence belongs to the Maf family. YhdE subfamily. It depends on a divalent metal cation as a cofactor.

It localises to the cytoplasm. It carries out the reaction dTTP + H2O = dTMP + diphosphate + H(+). The enzyme catalyses UTP + H2O = UMP + diphosphate + H(+). Its function is as follows. Nucleoside triphosphate pyrophosphatase that hydrolyzes dTTP and UTP. May have a dual role in cell division arrest and in preventing the incorporation of modified nucleotides into cellular nucleic acids. This chain is dTTP/UTP pyrophosphatase, found in Xanthomonas oryzae pv. oryzae (strain MAFF 311018).